A 142-amino-acid polypeptide reads, in one-letter code: Large ribosomal subunit protein uL13 (142 aa).

This sequence belongs to the universal ribosomal protein uL13 family. Part of the 50S ribosomal subunit.

In terms of biological role, this protein is one of the early assembly proteins of the 50S ribosomal subunit, although it is not seen to bind rRNA by itself. It is important during the early stages of 50S assembly. The sequence is that of Large ribosomal subunit protein uL13 from Pseudomonas entomophila (strain L48).